A 130-amino-acid chain; its full sequence is Small ribosomal subunit protein uS4 (130 aa).

Lysine 64 carries the N6-acetyllysine modification. Lysine 91 participates in a covalent cross-link: Glycyl lysine isopeptide (Lys-Gly) (interchain with G-Cter in SUMO2). Positions arginine 106 to glutamine 130 constitute an S4 RNA-binding domain. Lysine 114 carries the post-translational modification N6-acetyllysine.

This sequence belongs to the universal ribosomal protein uS4 family. As to quaternary structure, component of the small ribosomal subunit. Identified in a IGF2BP1-dependent mRNP granule complex containing untranslated mRNAs. Part of the small subunit (SSU) processome, composed of more than 70 proteins and the RNA chaperone small nucleolar RNA (snoRNA) U3.

The protein resides in the cytoplasm. It is found in the nucleus. Its subcellular location is the nucleolus. Component of the small ribosomal subunit. The ribosome is a large ribonucleoprotein complex responsible for the synthesis of proteins in the cell. Part of the small subunit (SSU) processome, first precursor of the small eukaryotic ribosomal subunit. During the assembly of the SSU processome in the nucleolus, many ribosome biogenesis factors, an RNA chaperone and ribosomal proteins associate with the nascent pre-rRNA and work in concert to generate RNA folding, modifications, rearrangements and cleavage as well as targeted degradation of pre-ribosomal RNA by the RNA exosome. The protein is Small ribosomal subunit protein uS4 (RPS9) of Sus scrofa (Pig).